Reading from the N-terminus, the 1050-residue chain is Inositol hexakisphosphate kinase 1 (1050 aa).

4 disordered regions span residues 87-117 (KITR…LSSS), 129-177 (PAIK…IQNV), 269-319 (RQEN…DNEH), and 396-423 (SDLD…NNND). Ser150 carries the phosphoserine modification. Polar residues predominate over residues 156 to 173 (KQQSHQPQVLHHQTSLKP). The span at 290 to 306 (ESIKEKPNTFEQDKEGE) shows a compositional bias: basic and acidic residues. The segment covering 307–316 (QADEEEDEGD) has biased composition (acidic residues). Phosphoserine is present on Ser396. A compositionally biased stretch (basic and acidic residues) spans 402 to 417 (NNGKNDTSNENKDIEV). Ser469 bears the Phosphoserine mark. Over residues 508–522 (NDSYFSSSSSHNSCS) the composition is skewed to low complexity. Disordered stretches follow at residues 508 to 539 (NDSY…DSGS) and 562 to 625 (RKRN…PNLQ). Phosphoserine is present on residues Ser537, Ser539, Ser566, Ser583, Ser589, Ser646, Ser664, and Ser670. Residues 566–624 (SNTTTMGNHNARLGSSPSFLTQKSRASSHDASNTSMKTLGDSSSQASLQMDDSKVNPNL) are compositionally biased toward polar residues. Substrate is bound at residue 772–780 (PCALDLKMG).

This sequence belongs to the inositol phosphokinase (IPK) family.

It is found in the cytoplasm. The catalysed reaction is 1D-myo-inositol hexakisphosphate + ATP = 5-diphospho-1D-myo-inositol 1,2,3,4,6-pentakisphosphate + ADP. It carries out the reaction 1-diphospho-1D-myo-inositol 2,3,4,5,6-pentakisphosphate + ATP + H(+) = 1,5-bis(diphospho)-1D-myo-inositol 2,3,4,6-tetrakisphosphate + ADP. Converts inositol hexakisphosphate (InsP6) to diphosphoinositol pentakisphosphate (InsP7/PP-InsP5). Involved in phosphate regulation and polyphosphate accumulation. Required for resistance to salt stress, cell wall integrity, vacuole morphogenesis, and telomere maintenance. This is Inositol hexakisphosphate kinase 1 (KCS1) from Saccharomyces cerevisiae (strain ATCC 204508 / S288c) (Baker's yeast).